We begin with the raw amino-acid sequence, 244 residues long: Large ribosomal subunit protein uL30w (244 aa).

It belongs to the universal ribosomal protein uL30 family.

This is Large ribosomal subunit protein uL30w (RPL7D) from Arabidopsis thaliana (Mouse-ear cress).